We begin with the raw amino-acid sequence, 342 residues long: RNA 3'-terminal phosphate cyclase (342 aa).

It belongs to the RNA 3'-terminal cyclase family. Type 1 subfamily.

The protein resides in the cytoplasm. The catalysed reaction is a 3'-end 3'-phospho-ribonucleotide-RNA + GTP = a 3'-end 2',3'-cyclophospho-ribonucleotide-RNA + GMP + diphosphate. Inhibited by GMP. Functionally, catalyzes the GTP-dependent conversion of 3'-phosphate to a 2',3'-cyclic phosphodiester at the end of RNA. The biological role of this enzyme is unknown but it is likely to function in some aspects of cellular RNA processing. In Pyrococcus furiosus (strain ATCC 43587 / DSM 3638 / JCM 8422 / Vc1), this protein is RNA 3'-terminal phosphate cyclase.